A 533-amino-acid polypeptide reads, in one-letter code: Probable intron-encoded endonuclease 3 (533 aa).

Helical transmembrane passes span 1–21, 30–50, and 81–101; these read MYLSIIILPLLGSIVAGFFGR, LITCLSVIITTGLAILAFFEV, and LTVAMLIPVLIISSLVHIYSI. Residues 1–108 form a ndh-5 exon 1 encoded region; sequence MYLSIIILPL…YSISYMSHDP (108 aa). A ndh-5 intron 1 encoded region spans residues 109–533; that stretch reads RGRVRGKRVY…SISLLLGRRR (425 aa).

In the N-terminal section; belongs to the complex I subunit 5 family. It in the C-terminal section; belongs to the LAGLIDADG endonuclease family.

Its subcellular location is the mitochondrion membrane. Its function is as follows. Mitochondrial DNA endonuclease involved in intron homing. The polypeptide is Probable intron-encoded endonuclease 3 (Neurospora crassa (strain ATCC 24698 / 74-OR23-1A / CBS 708.71 / DSM 1257 / FGSC 987)).